The primary structure comprises 431 residues: MQMFCYQCSQAANGTGCTEYGVCGKSPTVARLQDNLVFAIKGISAYYYHARELGYDDPEIAGFLDEALYSTLTNVNFDAQSFVEYALEAGRMNLRAMQLLKKAHIETYGEPTPVEVETGTKKGKGIIVTGHNLKALEELLKQVEGTNVYVYTHSEMLPAHGYPGLRKYKNLVGNLGKAWYDQRKLFTEYPVAILGTSNCVLIPSESYRDRMFTTSIARLPGVKHIDGYDYTEVIEKAKSLPDLEEKPGSYKLRTGFSTSVVVSLADKIKELVEAGKIKHFLVVGGCDVPFKRNEYYREFVQKLPKETVVITLACGKFRINDLDLGDIEGIPRLIDVGQCNDTIVAIEIAQALAKVFGVEVTDLPLTLVLTWMEQKAVAILWTLLALGLKNIYVGPVLPAWVNEDILKVLTAEFGLKTISEPEKDIKEILKV.

[4Fe-4S] cluster contacts are provided by C5, C8, C17, and C23. Residues H131, E155, C199, C286, C314, C339, E373, and K375 each coordinate hybrid [4Fe-2O-2S] cluster. A Cysteine persulfide modification is found at C286.

The protein belongs to the HCP family. It depends on [4Fe-4S] cluster as a cofactor. Hybrid [4Fe-2O-2S] cluster is required as a cofactor.

It is found in the cytoplasm. It carries out the reaction A + NH4(+) + H2O = hydroxylamine + AH2 + H(+). Functionally, catalyzes the reduction of hydroxylamine to form NH(3) and H(2)O. The protein is Hydroxylamine reductase of Thermotoga petrophila (strain ATCC BAA-488 / DSM 13995 / JCM 10881 / RKU-1).